A 532-amino-acid chain; its full sequence is Protein PTST homolog 2, chloroplastic (532 aa).

The transit peptide at Met1–Arg71 directs the protein to the chloroplast. 4 disordered regions span residues Gln165–Asp201, Glu256–Trp292, Ser314–Asn347, and His367–Asn388. The segment covering Glu173–Leu183 has biased composition (basic and acidic residues). The segment covering Val320–Ile339 has biased composition (basic and acidic residues). Positions Leu389–Thr454 form a coiled coil.

Interacts with PTST3 and SS4. Interacts with MFP1; the interaction is essential for the initiation of starch granules biosynthesis in leaf chloroplasts, for the correct location of the process in the stromal spaces between the thylakoid membranes, and for the association of this protein with the thylakoid membranes. Interacts with PII1/MRC; the interaction is essential for the initiation of starch granules biosynthesis in leaf chloroplasts.

The protein resides in the plastid. It localises to the chloroplast. It is found in the chloroplast thylakoid membrane. Functionally, involved in starch granule initiation in leaf chloroplasts. Binds and delivers suitable maltooligosaccharide substrates to starch synthase 4 (SS4). The protein is Protein PTST homolog 2, chloroplastic of Arabidopsis thaliana (Mouse-ear cress).